A 315-amino-acid chain; its full sequence is Putative HTH-type transcriptional regulatory protein PF1851 (315 aa).

The HTH cro/C1-type domain maps to 131–189 (LRELREKYGYSTTELAEMLGVSRKSVQRYEKGEGMVSIDVAIRLEEIFDEPLVKPIDIF). The segment at residues 142–161 (TTELAEMLGVSRKSVQRYEK) is a DNA-binding region (H-T-H motif).

In Pyrococcus furiosus (strain ATCC 43587 / DSM 3638 / JCM 8422 / Vc1), this protein is Putative HTH-type transcriptional regulatory protein PF1851.